The sequence spans 194 residues: Large ribosomal subunit protein bL9 (194 aa).

The tract at residues 167 to 194 is disordered; sequence EDRAAEAEAASDMAAGGAGSFEGDHYES.

This sequence belongs to the bacterial ribosomal protein bL9 family.

Functionally, binds to the 23S rRNA. This Caulobacter sp. (strain K31) protein is Large ribosomal subunit protein bL9.